A 298-amino-acid polypeptide reads, in one-letter code: UDP-N-acetylenolpyruvoylglucosamine reductase (298 aa).

The FAD-binding PCMH-type domain occupies 26-191; that stretch reads KTGGPADWLA…LDATFALEPG (166 aa). The active site involves Arg-170. Ser-220 acts as the Proton donor in catalysis. Residue Glu-290 is part of the active site.

It belongs to the MurB family. FAD is required as a cofactor.

It is found in the cytoplasm. The enzyme catalyses UDP-N-acetyl-alpha-D-muramate + NADP(+) = UDP-N-acetyl-3-O-(1-carboxyvinyl)-alpha-D-glucosamine + NADPH + H(+). The protein operates within cell wall biogenesis; peptidoglycan biosynthesis. Cell wall formation. This Limosilactobacillus reuteri subsp. reuteri (strain JCM 1112) (Lactobacillus reuteri) protein is UDP-N-acetylenolpyruvoylglucosamine reductase.